Here is a 172-residue protein sequence, read N- to C-terminus: Protein GrpE (172 aa).

The interval 1–23 (MNQDHPEFDSEDLSQNPPETDPL) is disordered.

The protein belongs to the GrpE family. Homodimer.

It localises to the cytoplasm. Functionally, participates actively in the response to hyperosmotic and heat shock by preventing the aggregation of stress-denatured proteins, in association with DnaK and GrpE. It is the nucleotide exchange factor for DnaK and may function as a thermosensor. Unfolded proteins bind initially to DnaJ; upon interaction with the DnaJ-bound protein, DnaK hydrolyzes its bound ATP, resulting in the formation of a stable complex. GrpE releases ADP from DnaK; ATP binding to DnaK triggers the release of the substrate protein, thus completing the reaction cycle. Several rounds of ATP-dependent interactions between DnaJ, DnaK and GrpE are required for fully efficient folding. This is Protein GrpE from Xanthomonas axonopodis pv. citri (strain 306).